Here is a 2124-residue protein sequence, read N- to C-terminus: Genome polyprotein (2124 aa).

A lipid anchor (N-myristoyl glycine; by host) is attached at Gly2. A host EIF4E binding region spans residues 873-880 (VARDLLLI). The 163-residue stretch at 1102–1264 (VQIATYFRNF…SAATKNGKLD (163 aa)) folds into the SF3 helicase domain. 1130 to 1137 (GKPGVGKS) serves as a coordination point for ATP. A compositionally biased stretch (basic and acidic residues) spans 1415–1437 (DKPKEEEEEPEEKKEKKTEESKE). The interval 1415–1446 (DKPKEEEEEPEEKKEKKTEESKEAAGPYNGPT) is disordered. The residue at position 1442 (Tyr1442) is an O-(5'-phospho-RNA)-tyrosine. In terms of domain architecture, Peptidase C3 spans 1459–1648 (SPLMDMEKKI…VGTRLTARMI (190 aa)). Catalysis depends on for protease 3C activity residues His1501, Asp1535, and Cys1612. The RdRp catalytic domain maps to 1893 to 2011 (PYLYDFDYSN…ASKFELDLVM (119 aa)). Active-site for RdRp activity residues include Asp1899 and Asp1997.

It belongs to the picornaviruses polyprotein family. In terms of assembly, interacts with host EIF4E. Interacts with host IFIH1/MDA5; this interaction inhibits the induction of the IFN-beta signal pathway. Specific enzymatic cleavages by the viral protease in vivo yield a variety of precursors and mature proteins. The polyprotein seems to be cotranslationally cleaved at the 2A/2B junction by a ribosomal skip from one codon to the next without formation of a peptide bond. This process would release the P1-2A peptide from the translational complex. Post-translationally, during virion maturation, immature virions are rendered infectious following cleavage of VP0 into VP4 and VP2. This maturation seems to be an autocatalytic event triggered by the presence of RNA in the capsid and is followed by a conformational change of the particle. In terms of processing, myristoylation is required during RNA encapsidation and formation of the mature virus particle. Uridylylated by the polymerase and is covalently linked to the 5'-end of genomic RNA. This uridylylated form acts as a nucleotide-peptide primer for the polymerase.

The protein localises to the virion. It localises to the host cytoplasm. Its subcellular location is the host nucleus. It is found in the host nucleolus. The protein resides in the host cytoplasmic vesicle membrane. The catalysed reaction is RNA(n) + a ribonucleoside 5'-triphosphate = RNA(n+1) + diphosphate. It catalyses the reaction ATP + H2O = ADP + phosphate + H(+). The enzyme catalyses Selective cleavage of Gln-|-Gly bond in the poliovirus polyprotein. In other picornavirus reactions Glu may be substituted for Gln, and Ser or Thr for Gly.. Its function is as follows. Forms an icosahedral capsid of pseudo T=3 symmetry with capsid proteins VP2 and VP3. Together they form an icosahedral capsid composed of 60 copies of each VP1, VP2, and VP3, with a diameter of approximately 300 Angstroms. VP4 lies on the inner surface of the protein shell formed by VP1, VP2 and VP3. All the three latter proteins contain a beta-sheet structure called beta-barrel jelly roll. VP1 is situated at the 12 fivefold axes, whereas VP2 and VP3 are located at the quasi-sixfold axes. Lies on the inner surface of the capsid shell. After binding to the host receptor, the capsid undergoes conformational changes. Capsid protein VP4 is released, capsid protein VP1 N-terminus is externalized, and together, they shape a pore in the host membrane through which the viral genome is translocated into the host cell cytoplasm. After genome has been released, the channel shrinks. In terms of biological role, VP0 precursor is a component of immature procapsids. Functionally, involved in host translation shutoff by inhibiting cap-dependent mRNA translation. Nuclear localization is required for this function. The resulting inhibition of cellular protein synthesis serves to ensure maximal viral gene expression and to evade host immune response. Its function is as follows. Affects membrane integrity and causes an increase in membrane permeability. Associates with and induces structural rearrangements of intracellular membranes. It displays RNA-binding, nucleotide binding and NTPase activities. Interacts with IFIH1/MDA5 to inhibit the induction of the IFN-beta signal pathway. In terms of biological role, serves as membrane anchor via its hydrophobic domain. Functionally, forms a primer, VPg-pU, which is utilized by the polymerase for the initiation of RNA chains. Its function is as follows. Cysteine protease that generates mature viral proteins from the precursor polyprotein. In addition to its proteolytic activity, it binds to viral RNA, and thus influences viral genome replication. RNA and substrate cooperatively bind to the protease. Cleaves host PABP1, this cleavage is important for viral replication. Cleaves host TANK and disrupts the TANK-TBK1-IKKepsilon-IRF3 complex, thereby inhibiting the induction of the IFN-beta signal pathway. Replicates the genomic and antigenomic RNAs by recognizing replications specific signals. Performs VPg uridylylation. This chain is Genome polyprotein, found in Cosavirus A (isolate Human/Pakistan/0553/-) (HCoSV-A).